The following is a 20-amino-acid chain: C-reactive protein (20 aa).

Positions 1–20 (SPVAASYRATAGLAGKALDF) constitute a Pentraxin (PTX) domain.

Belongs to the pentraxin family. As to quaternary structure, homodimer; disulfide-linked. It is not known if it assembles into a pentraxin (or pentaxin) structure. Pentraxins have a discoid arrangement of 5 non-covalently bound subunits. Glycosylated.

The protein localises to the secreted. Displays several functions associated with host defense: it promotes agglutination, bacterial capsular swelling, phagocytosis, and complement fixation through its calcium-dependent binding to phosphorylcholine. The chain is C-reactive protein from Mustelus canis (Smooth dogfish).